The chain runs to 230 residues: Orotidine 5'-phosphate decarboxylase (230 aa).

Residues Asp10, Lys32, 59–68 (DLKFHDIPRT), Thr116, Arg177, Gln186, Gly206, and Arg207 contribute to the substrate site. The active-site Proton donor is the Lys61.

Belongs to the OMP decarboxylase family. Type 1 subfamily. As to quaternary structure, homodimer.

The enzyme catalyses orotidine 5'-phosphate + H(+) = UMP + CO2. It participates in pyrimidine metabolism; UMP biosynthesis via de novo pathway; UMP from orotate: step 2/2. Catalyzes the decarboxylation of orotidine 5'-monophosphate (OMP) to uridine 5'-monophosphate (UMP). The polypeptide is Orotidine 5'-phosphate decarboxylase (Methylacidiphilum infernorum (isolate V4) (Methylokorus infernorum (strain V4))).